The primary structure comprises 105 residues: uncharacterized protein (105 aa).

3 helical membrane passes run 3–23, 41–61, and 63–83; these read ISPL…QALF, DLVN…ALVS, and AFPV…TFIY.

The protein localises to the cell membrane. This is an uncharacterized protein from Methanocaldococcus jannaschii (strain ATCC 43067 / DSM 2661 / JAL-1 / JCM 10045 / NBRC 100440) (Methanococcus jannaschii).